The sequence spans 590 residues: Aspartate--tRNA(Asp/Asn) ligase (590 aa).

Residue Glu175 participates in L-aspartate binding. Residues 199 to 202 (QQYK) form an aspartate region. Arg221 and His450 together coordinate L-aspartate. 221–223 (RDE) contributes to the ATP binding site. Glu484 is a binding site for ATP. Arg491 is a binding site for L-aspartate. 536–539 (GVDR) contacts ATP.

This sequence belongs to the class-II aminoacyl-tRNA synthetase family. Type 1 subfamily. In terms of assembly, homodimer.

It localises to the cytoplasm. The enzyme catalyses tRNA(Asx) + L-aspartate + ATP = L-aspartyl-tRNA(Asx) + AMP + diphosphate. Aspartyl-tRNA synthetase with relaxed tRNA specificity since it is able to aspartylate not only its cognate tRNA(Asp) but also tRNA(Asn). Reaction proceeds in two steps: L-aspartate is first activated by ATP to form Asp-AMP and then transferred to the acceptor end of tRNA(Asp/Asn). The protein is Aspartate--tRNA(Asp/Asn) ligase of Rhodopseudomonas palustris (strain BisB18).